A 690-amino-acid chain; its full sequence is Phosphate acetyltransferase (690 aa).

The phosphate acetyltransferase stretch occupies residues 365 to 690 (MFTYRLLQQA…TAIQAQGVHE (326 aa)).

It in the N-terminal section; belongs to the CobB/CobQ family. In the C-terminal section; belongs to the phosphate acetyltransferase and butyryltransferase family.

It localises to the cytoplasm. It catalyses the reaction acetyl-CoA + phosphate = acetyl phosphate + CoA. It participates in metabolic intermediate biosynthesis; acetyl-CoA biosynthesis; acetyl-CoA from acetate: step 2/2. Its function is as follows. Involved in acetate metabolism. The sequence is that of Phosphate acetyltransferase (pta) from Mycobacterium tuberculosis (strain CDC 1551 / Oshkosh).